The sequence spans 150 residues: Ribosomal RNA large subunit methyltransferase H (150 aa).

S-adenosyl-L-methionine is bound by residues Leu71, Gly100, and 118–123; that span reads FSQMTF.

The protein belongs to the RNA methyltransferase RlmH family. In terms of assembly, homodimer.

It is found in the cytoplasm. It carries out the reaction pseudouridine(1915) in 23S rRNA + S-adenosyl-L-methionine = N(3)-methylpseudouridine(1915) in 23S rRNA + S-adenosyl-L-homocysteine + H(+). Specifically methylates the pseudouridine at position 1915 (m3Psi1915) in 23S rRNA. This chain is Ribosomal RNA large subunit methyltransferase H, found in Mycoplasmopsis agalactiae (strain NCTC 10123 / CIP 59.7 / PG2) (Mycoplasma agalactiae).